Reading from the N-terminus, the 145-residue chain is Large ribosomal subunit protein uL16 (145 aa).

The protein belongs to the universal ribosomal protein uL16 family. As to quaternary structure, part of the 50S ribosomal subunit.

Its function is as follows. Binds 23S rRNA and is also seen to make contacts with the A and possibly P site tRNAs. The polypeptide is Large ribosomal subunit protein uL16 (Herpetosiphon aurantiacus (strain ATCC 23779 / DSM 785 / 114-95)).